Reading from the N-terminus, the 212-residue chain is Lysozyme g-like protein 2 (212 aa).

The N-terminal stretch at 1–19 (MLSSVVFWGLIALIGTSRG) is a signal peptide. Disulfide bonds link Cys39/Cys92 and Cys53/Cys61. The active site involves Glu105.

The protein belongs to the glycosyl hydrolase 23 family. In terms of tissue distribution, strong expression detected in the eye and weak expression in the testis. No expression is observed in any other tissues.

It is found in the secreted. May act as a potent antibacterial protein that may play a role in the innate immunity. The protein is Lysozyme g-like protein 2 (LYG2) of Homo sapiens (Human).